Here is a 42-residue protein sequence, read N- to C-terminus: Photosystem I reaction center subunit IX (42 aa).

Residues 7 to 27 (YLSAAPVLSTLWLGALAGLLI) form a helical membrane-spanning segment.

It belongs to the PsaJ family.

Its subcellular location is the plastid membrane. Functionally, may help in the organization of the PsaE and PsaF subunits. The sequence is that of Photosystem I reaction center subunit IX from Cuscuta exaltata (Tall dodder).